We begin with the raw amino-acid sequence, 603 residues long: Laccase 1 (603 aa).

The first 20 residues, 1 to 20 (MSRFARLLLIVALFFTNAWA), serve as a signal peptide directing secretion. 2 consecutive Plastocyanin-like domains span residues 66–108 (QRPI…IHIR) and 159–349 (LVVS…MRIP). Cu cation contacts are provided by His-90 and His-92. N-linked (GlcNAc...) asparagine glycosylation is found at Asn-246, Asn-269, Asn-434, and Asn-474. Residues 460 to 588 (TRDTENDGLV…GGMGIAILDG (129 aa)) enclose the Plastocyanin-like 3 domain. Positions 496, 499, and 501 each coordinate Cu cation. N-linked (GlcNAc...) asparagine glycosylation is present at Asn-516. 4 residues coordinate Cu cation: His-570, Cys-571, His-572, and His-576.

The protein belongs to the multicopper oxidase family. Cu cation is required as a cofactor.

The protein localises to the cell surface. It participates in pigment biosynthesis. Functionally, laccase; part of the Pks1 gene cluster that mediates the biosynthesis of an anthraquinone derivative pigment that contributes to conidial pigmentation that provides protection from UV radiation, heat and cold stress. The polyketide synthase Pks1 produces 1-acetyl-2,4,6,8-tetrahydroxy-9,10-anthraquinone though condensation of acetyl-CoA with malonyl-CoA. The dehydratase EthD and the laccase Mlac1 further convert the anthraquinone derivative into the final conidial pigment. This chain is Laccase 1, found in Metarhizium anisopliae (Entomophthora anisopliae).